Reading from the N-terminus, the 505-residue chain is Glutamate--tRNA ligase (505 aa).

The 'HIGH' region motif lies at 11–21 (PSPTGPLHIGG). Residues 260–264 (KLSKR) carry the 'KMSKS' region motif. Lysine 263 lines the ATP pocket.

The protein belongs to the class-I aminoacyl-tRNA synthetase family. Glutamate--tRNA ligase type 1 subfamily. Monomer.

It is found in the cytoplasm. It catalyses the reaction tRNA(Glu) + L-glutamate + ATP = L-glutamyl-tRNA(Glu) + AMP + diphosphate. In terms of biological role, catalyzes the attachment of glutamate to tRNA(Glu) in a two-step reaction: glutamate is first activated by ATP to form Glu-AMP and then transferred to the acceptor end of tRNA(Glu). The polypeptide is Glutamate--tRNA ligase (Christiangramia forsetii (strain DSM 17595 / CGMCC 1.15422 / KT0803) (Gramella forsetii)).